A 542-amino-acid polypeptide reads, in one-letter code: Glutamyl-tRNA(Gln) amidotransferase subunit B, mitochondrial (542 aa).

Residues 1-66 (MRVFRRFYQV…PNSHTSFFDI (66 aa)) constitute a mitochondrion transit peptide.

It belongs to the GatB/GatE family. GatB subfamily. In terms of assembly, subunit of the heterotrimeric GatFAB amidotransferase (AdT) complex, composed of A, B and F subunits.

Its subcellular location is the mitochondrion. It catalyses the reaction L-glutamyl-tRNA(Gln) + L-glutamine + ATP + H2O = L-glutaminyl-tRNA(Gln) + L-glutamate + ADP + phosphate + H(+). Its function is as follows. Allows the formation of correctly charged Gln-tRNA(Gln) through the transamidation of misacylated Glu-tRNA(Gln) in the mitochondria. The reaction takes place in the presence of glutamine and ATP through an activated gamma-phospho-Glu-tRNA(Gln). This is Glutamyl-tRNA(Gln) amidotransferase subunit B, mitochondrial from Zygosaccharomyces rouxii (strain ATCC 2623 / CBS 732 / NBRC 1130 / NCYC 568 / NRRL Y-229).